The chain runs to 204 residues: MGSAEPISAIATFENVSLADQTCLHGEDCDKLRKNFEECLKLKGVPEDNLGIALGLCLYSCATIGTSNKVNVQPTSTFIKASFGGGKELYLTHGELNSFLGSQKLLEGKPNKLRCFCRTFQKDYISLRKEYRGKLPPIARANRHGLPAEDHYLAADFISTSTELTDLQQSRLLLARENATHTEFSSESPVTSLKQLGRGLGTGR.

Residues 183–194 are compositionally biased toward polar residues; that stretch reads EFSSESPVTSLK. The segment at 183–204 is disordered; sequence EFSSESPVTSLKQLGRGLGTGR.

This sequence belongs to the closteroviridae capsid protein family.

The protein localises to the virion. Functionally, component that constitutes the body part of the virion. Also acts as a movement protein that is involved in local cell-cell movement via plamodesmata. At least five viral proteins, CP, CPm, p6, p64 and Hsp70h are essential for cell-cell movement. The sequence is that of Capsid protein from Beet yellows virus (isolate Ukraine) (BYV).